The following is a 371-amino-acid chain: uncharacterized protein (371 aa).

It belongs to the serpin family.

This is an uncharacterized protein from Pyrobaculum aerophilum (strain ATCC 51768 / DSM 7523 / JCM 9630 / CIP 104966 / NBRC 100827 / IM2).